A 232-amino-acid chain; its full sequence is Ubiquinone biosynthesis O-methyltransferase (232 aa).

Arginine 36, glycine 55, aspartate 76, and methionine 120 together coordinate S-adenosyl-L-methionine.

This sequence belongs to the methyltransferase superfamily. UbiG/COQ3 family.

The catalysed reaction is a 3-demethylubiquinol + S-adenosyl-L-methionine = a ubiquinol + S-adenosyl-L-homocysteine + H(+). It carries out the reaction a 3-(all-trans-polyprenyl)benzene-1,2-diol + S-adenosyl-L-methionine = a 2-methoxy-6-(all-trans-polyprenyl)phenol + S-adenosyl-L-homocysteine + H(+). Its pathway is cofactor biosynthesis; ubiquinone biosynthesis. In terms of biological role, O-methyltransferase that catalyzes the 2 O-methylation steps in the ubiquinone biosynthetic pathway. The protein is Ubiquinone biosynthesis O-methyltransferase of Thiobacillus denitrificans (strain ATCC 25259 / T1).